A 250-amino-acid polypeptide reads, in one-letter code: 5-oxoprolinase subunit A (250 aa).

The protein belongs to the LamB/PxpA family. In terms of assembly, forms a complex composed of PxpA, PxpB and PxpC.

The catalysed reaction is 5-oxo-L-proline + ATP + 2 H2O = L-glutamate + ADP + phosphate + H(+). Catalyzes the cleavage of 5-oxoproline to form L-glutamate coupled to the hydrolysis of ATP to ADP and inorganic phosphate. This is 5-oxoprolinase subunit A from Thermus thermophilus (strain ATCC 27634 / DSM 579 / HB8).